Consider the following 141-residue polypeptide: Large ribosomal subunit protein uL13 (141 aa).

This sequence belongs to the universal ribosomal protein uL13 family. Part of the 50S ribosomal subunit.

Functionally, this protein is one of the early assembly proteins of the 50S ribosomal subunit, although it is not seen to bind rRNA by itself. It is important during the early stages of 50S assembly. The chain is Large ribosomal subunit protein uL13 from Sulfurovum sp. (strain NBC37-1).